The chain runs to 470 residues: Uronate isomerase (470 aa).

It belongs to the metallo-dependent hydrolases superfamily. Uronate isomerase family.

It carries out the reaction D-glucuronate = D-fructuronate. It catalyses the reaction aldehydo-D-galacturonate = keto-D-tagaturonate. It functions in the pathway carbohydrate metabolism; pentose and glucuronate interconversion. In Salmonella arizonae (strain ATCC BAA-731 / CDC346-86 / RSK2980), this protein is Uronate isomerase.